A 697-amino-acid chain; its full sequence is MTEHKVNVEFGGRTITIATGKWAKQASGAVVVSCGDTVVLVTAVATKSAREGQDFFPLTVNYQEKAYAGGKIPGGFFKREGRPSDNETLTSRFIDRPIRPLFPESFLNDTQIMATVVSADQDNDPGILAMIGASAALEVSDIPFLGPIAGVKVGRVDGQFVCNPTVEQLEKSDLEIVVAASRDAVIMVEGGAAEASEKDVLEAIFFGHAAVQPIIEAQTDLRKLAGVPKREVAATSVDEALKTRVKDLAYAGIKEAVRIVAKQERHNRIGEITAQTLETLLPEYEGRESEIKGFLGDFEYELVREHIIKDGYRIDGRDTTTIRPISIEVSMLPRAHGSALFTRGETQALVASTLGTSIDEQRIDSLYGETRKRFLLHYNFPPFSVGETSFRLAPGRREIGHGMLAERALERVVPKHEDFPYTIRIVSDILESNGSSSMATVCGGALAMMDAGVPIKAPVAGIAMGLIKEGEGIAILSDILGDEDHLGDMDFKVAGTEAGVTAIQMDIKITGVTREIMEKALLQARDGRLHILGKMNQAIAAPRTDLSPYAPRITTIWVKTDKIRDVIGSGGKNIRGITEATGVSIDIEDSGRINIASTSKEACDKAIKMIRDLTAEAEEGKLYMGTVKKVMDFGAFVEIFPGTDGLVHISELDTERVKNVTDVLNEGDKVLVKCIGIDKQGKIKLSRKEALGAVLPE.

Residues D484 and D490 each contribute to the Mg(2+) site. The KH domain occupies 551 to 610 (PRITTIWVKTDKIRDVIGSGGKNIRGITEATGVSIDIEDSGRINIASTSKEACDKAIKMI). The S1 motif domain maps to 620–688 (GKLYMGTVKK…KQGKIKLSRK (69 aa)).

It belongs to the polyribonucleotide nucleotidyltransferase family. It depends on Mg(2+) as a cofactor.

Its subcellular location is the cytoplasm. The catalysed reaction is RNA(n+1) + phosphate = RNA(n) + a ribonucleoside 5'-diphosphate. Functionally, involved in mRNA degradation. Catalyzes the phosphorolysis of single-stranded polyribonucleotides processively in the 3'- to 5'-direction. This Geobacter sulfurreducens (strain ATCC 51573 / DSM 12127 / PCA) protein is Polyribonucleotide nucleotidyltransferase.